A 428-amino-acid polypeptide reads, in one-letter code: Arginine biosynthesis bifunctional protein ArgJ, mitochondrial (428 aa).

Substrate contacts are provided by Thr-171, Lys-197, Thr-208, Glu-294, Asn-423, and Ser-428. Thr-208 (nucleophile) is an active-site residue.

The protein belongs to the ArgJ family. In terms of assembly, heterodimer of an alpha and a beta chain. Post-translationally, the alpha and beta chains are autoproteolytically processed from a single precursor protein within the mitochondrion.

The protein resides in the mitochondrion matrix. It catalyses the reaction N(2)-acetyl-L-ornithine + L-glutamate = N-acetyl-L-glutamate + L-ornithine. The enzyme catalyses L-glutamate + acetyl-CoA = N-acetyl-L-glutamate + CoA + H(+). It participates in amino-acid biosynthesis; L-arginine biosynthesis; L-ornithine and N-acetyl-L-glutamate from L-glutamate and N(2)-acetyl-L-ornithine (cyclic): step 1/1. The protein operates within amino-acid biosynthesis; L-arginine biosynthesis; N(2)-acetyl-L-ornithine from L-glutamate: step 1/4. Catalyzes two activities which are involved in the cyclic version of arginine biosynthesis: the synthesis of acetylglutamate from glutamate and acetyl-CoA, and of ornithine by transacetylation between acetylornithine and glutamate. In Komagataella phaffii (strain GS115 / ATCC 20864) (Yeast), this protein is Arginine biosynthesis bifunctional protein ArgJ, mitochondrial.